Consider the following 307-residue polypeptide: Recombination-associated protein RdgC (307 aa).

It belongs to the RdgC family.

The protein resides in the cytoplasm. It is found in the nucleoid. Functionally, may be involved in recombination. The chain is Recombination-associated protein RdgC from Burkholderia cenocepacia (strain ATCC BAA-245 / DSM 16553 / LMG 16656 / NCTC 13227 / J2315 / CF5610) (Burkholderia cepacia (strain J2315)).